Consider the following 427-residue polypeptide: UPF0415 protein C7orf25 homolog (427 aa).

Residues Gly-200–Thr-234 are compositionally biased toward acidic residues. The segment at Gly-200–Leu-236 is disordered.

This sequence belongs to the UPF0415 family.

In Danio rerio (Zebrafish), this protein is UPF0415 protein C7orf25 homolog.